The sequence spans 343 residues: Anthranilate phosphoribosyltransferase (343 aa).

Residues glycine 86, 89-90 (GD), threonine 94, 96-99 (NIST), 114-122 (KHGNRSASG), and serine 126 contribute to the 5-phospho-alpha-D-ribose 1-diphosphate site. Residue glycine 86 participates in anthranilate binding. Position 98 (serine 98) interacts with Mg(2+). Asparagine 117 serves as a coordination point for anthranilate. An anthranilate-binding site is contributed by arginine 172. Mg(2+)-binding residues include aspartate 231 and glutamate 232.

The protein belongs to the anthranilate phosphoribosyltransferase family. In terms of assembly, homodimer. Mg(2+) is required as a cofactor.

The enzyme catalyses N-(5-phospho-beta-D-ribosyl)anthranilate + diphosphate = 5-phospho-alpha-D-ribose 1-diphosphate + anthranilate. Its pathway is amino-acid biosynthesis; L-tryptophan biosynthesis; L-tryptophan from chorismate: step 2/5. In terms of biological role, catalyzes the transfer of the phosphoribosyl group of 5-phosphorylribose-1-pyrophosphate (PRPP) to anthranilate to yield N-(5'-phosphoribosyl)-anthranilate (PRA). The protein is Anthranilate phosphoribosyltransferase of Synechococcus sp. (strain JA-3-3Ab) (Cyanobacteria bacterium Yellowstone A-Prime).